The following is a 1373-amino-acid chain: DNA-directed RNA polymerase subunit beta (1373 aa).

The protein belongs to the RNA polymerase beta chain family. As to quaternary structure, the RNAP catalytic core consists of 2 alpha, 1 beta, 1 beta' and 1 omega subunit. When a sigma factor is associated with the core the holoenzyme is formed, which can initiate transcription.

The enzyme catalyses RNA(n) + a ribonucleoside 5'-triphosphate = RNA(n+1) + diphosphate. Functionally, DNA-dependent RNA polymerase catalyzes the transcription of DNA into RNA using the four ribonucleoside triphosphates as substrates. In Rhodopseudomonas palustris (strain BisB18), this protein is DNA-directed RNA polymerase subunit beta.